A 295-amino-acid chain; its full sequence is Probable deoxyhypusine synthase (295 aa).

Lys267 functions as the Nucleophile in the catalytic mechanism.

This sequence belongs to the deoxyhypusine synthase family. NAD(+) is required as a cofactor.

It catalyses the reaction [eIF5A protein]-L-lysine + spermidine = [eIF5A protein]-deoxyhypusine + propane-1,3-diamine. It functions in the pathway protein modification; eIF5A hypusination. In terms of biological role, catalyzes the NAD-dependent oxidative cleavage of spermidine and the subsequent transfer of the butylamine moiety of spermidine to the epsilon-amino group of a specific lysine residue of the eIF-5A precursor protein to form the intermediate deoxyhypusine residue. This chain is Probable deoxyhypusine synthase, found in Pyrobaculum calidifontis (strain DSM 21063 / JCM 11548 / VA1).